We begin with the raw amino-acid sequence, 62 residues long: Defensin BmKDfsin6 (62 aa).

Residues 1-24 (MKVIAILFLLAFVLCTMEITMVEA) form the signal peptide. 3 cysteine pairs are disulfide-bonded: Cys-28–Cys-49, Cys-35–Cys-57, and Cys-39–Cys-59.

Belongs to the invertebrate defensin family. Type 2 subfamily. Highly expressed in non-venom gland (hemolymph) and moderately expressed in venom gland.

It is found in the secreted. Functionally, antibacterial peptide active against Gram-positive bacteria, but not on Gram-negative bacteria. Also has weak blocking activity on Kv1.1/KCNA1, Kv1.2/KCNA2, Kv1.3/KCNA3, KCa3.1/KCNN4/IK, KCa2.3/KCNN3/SK3 and Kv11.1/KCNH2/ERG1 channels (tested at 1 uM). It inhibits potassium channel current by interacting with the pore region. This chain is Defensin BmKDfsin6, found in Olivierus martensii (Manchurian scorpion).